The following is a 432-amino-acid chain: Amino-acid acetyltransferase (432 aa).

Positions 286-425 (ELVREAAIED…ASLYNFQRNS (140 aa)) constitute an N-acetyltransferase domain.

Belongs to the acetyltransferase family. ArgA subfamily.

It localises to the cytoplasm. It catalyses the reaction L-glutamate + acetyl-CoA = N-acetyl-L-glutamate + CoA + H(+). It participates in amino-acid biosynthesis; L-arginine biosynthesis; N(2)-acetyl-L-ornithine from L-glutamate: step 1/4. This chain is Amino-acid acetyltransferase, found in Pseudomonas syringae pv. tomato (strain ATCC BAA-871 / DC3000).